The chain runs to 81 residues: Large ribosomal subunit protein bL27 (81 aa).

The span at Met1–Lys11 shows a compositional bias: polar residues. The disordered stretch occupies residues Met1–Lys24.

Belongs to the bacterial ribosomal protein bL27 family.

The polypeptide is Large ribosomal subunit protein bL27 (Borrelia duttonii (strain Ly)).